We begin with the raw amino-acid sequence, 67 residues long: uncharacterized protein (67 aa).

This is an uncharacterized protein from Vaccinia virus (strain Copenhagen) (VACV).